We begin with the raw amino-acid sequence, 402 residues long: 1-deoxy-D-xylulose 5-phosphate reductoisomerase (402 aa).

NADPH is bound by residues Thr13, Gly14, Ser15, Ile16, and Asn126. A 1-deoxy-D-xylulose 5-phosphate-binding site is contributed by Lys127. Glu128 contacts NADPH. Mn(2+) is bound at residue Asp152. 1-deoxy-D-xylulose 5-phosphate contacts are provided by Ser153, Glu154, Ser188, and His211. Glu154 serves as a coordination point for Mn(2+). Position 217 (Gly217) interacts with NADPH. 1-deoxy-D-xylulose 5-phosphate-binding residues include Ser224, Asn229, Lys230, and Glu233. Mn(2+) is bound at residue Glu233.

The protein belongs to the DXR family. The cofactor is Mg(2+). Mn(2+) serves as cofactor.

The catalysed reaction is 2-C-methyl-D-erythritol 4-phosphate + NADP(+) = 1-deoxy-D-xylulose 5-phosphate + NADPH + H(+). It functions in the pathway isoprenoid biosynthesis; isopentenyl diphosphate biosynthesis via DXP pathway; isopentenyl diphosphate from 1-deoxy-D-xylulose 5-phosphate: step 1/6. In terms of biological role, catalyzes the NADPH-dependent rearrangement and reduction of 1-deoxy-D-xylulose-5-phosphate (DXP) to 2-C-methyl-D-erythritol 4-phosphate (MEP). The chain is 1-deoxy-D-xylulose 5-phosphate reductoisomerase from Psychrobacter arcticus (strain DSM 17307 / VKM B-2377 / 273-4).